The following is a 287-amino-acid chain: Outer membrane protein TP0453 (287 aa).

A signal peptide spans 1–24 (MIRRRYRGCTQGAWIVSVGMLFAS). Cysteine 25 is lipidated: N-palmitoyl cysteine. A lipid anchor (S-diacylglycerol cysteine) is attached at cysteine 25. 9 amphipathic helix regions span residues 36–40 (PLGVV), 56–63 (ENLISRII), 69–77 (KADIKKIVD), 103–112 (YAFTNLIFSR), 155–162 (MSKMLSRL), 172–179 (PRFEKECT), 194–202 (GGHFITKLL), 240–250 (FPIQFLISRVL), and 270–279 (AERLASVISS).

In terms of assembly, a mix of monomer and dimers; may integrate into the membrane as a dimer. In terms of processing, palmitoylated upon expression of a fusion protein with first 46 residues fused to PhoA in E.coli.

It is found in the cell outer membrane. Its function is as follows. Might be involved in ligand transport, alters membrane permeability at acidic pH (4.0 to 5.5). Incubation of the non-lipidated form with lipid vesicles increases their permeability. This Treponema pallidum (strain Nichols) protein is Outer membrane protein TP0453.